The primary structure comprises 235 residues: Venom metalloproteinase antarease-like TserMP_B (235 aa).

The 230-residue stretch at 4 to 233 (IVVEYYIVTD…PTASCIFQQC (230 aa)) folds into the Peptidase M12B domain. Cysteines 137 and 228 form a disulfide. His161 contributes to the Zn(2+) binding site. Residue Glu162 is part of the active site. Residues His165 and His171 each contribute to the Zn(2+) site.

This sequence belongs to the venom metalloproteinase (M12B) family. It depends on Zn(2+) as a cofactor. In terms of tissue distribution, expressed by the venom gland.

It is found in the secreted. Its activity is regulated as follows. Inhibited by EDTA. Acts as a metalloprotease. Penetrates intact tissue and specifically cleaves the vesicle-associated membrane protein 2 (VAMP2) (part of the SNARE complex) involved in pancreatic secretion, thus disrupting the normal vesicular traffic. The chain is Venom metalloproteinase antarease-like TserMP_B from Tityus serrulatus (Brazilian scorpion).